The primary structure comprises 373 residues: Histidinol-phosphate aminotransferase (373 aa).

Over residues Met1 to Thr10 the composition is skewed to polar residues. Residues Met1 to Pro45 form a disordered region. Lys237 carries the N6-(pyridoxal phosphate)lysine modification.

This sequence belongs to the class-II pyridoxal-phosphate-dependent aminotransferase family. Histidinol-phosphate aminotransferase subfamily. Homodimer. The cofactor is pyridoxal 5'-phosphate.

The enzyme catalyses L-histidinol phosphate + 2-oxoglutarate = 3-(imidazol-4-yl)-2-oxopropyl phosphate + L-glutamate. Its pathway is amino-acid biosynthesis; L-histidine biosynthesis; L-histidine from 5-phospho-alpha-D-ribose 1-diphosphate: step 7/9. The sequence is that of Histidinol-phosphate aminotransferase from Mycolicibacterium vanbaalenii (strain DSM 7251 / JCM 13017 / BCRC 16820 / KCTC 9966 / NRRL B-24157 / PYR-1) (Mycobacterium vanbaalenii).